We begin with the raw amino-acid sequence, 299 residues long: MPQPYPFGRVITAMITPFNAEGQVAYDIAQSLAVHLVEQGSDGLVICGTTGESPTLTWEEELQLFRAVKEAVGDRAAVIAGTGSNCTREAIAATQSAATLGLNGSLQVVPYYNKPPQEGLYAHFRAIAEACPDLPLMLYNIPGRTGQSLQPETVARLASLPNVVAIKAASGNVEEVSALRQLLPDSFAIYSGDDSLTLPMLAVGAQGVVSVASHLVGPQLQALIQAFEAGNVARAQQLHHQLYPLFKALFLTTNPIPVRAAMELLGWSIGLPRLPLVPASAEIRQALASCLTELGLYTA.

Threonine 50 provides a ligand contact to pyruvate. The Proton donor/acceptor role is filled by tyrosine 139. Lysine 167 functions as the Schiff-base intermediate with substrate in the catalytic mechanism. Valine 209 serves as a coordination point for pyruvate.

The protein belongs to the DapA family. In terms of assembly, homotetramer; dimer of dimers.

It is found in the cytoplasm. The enzyme catalyses L-aspartate 4-semialdehyde + pyruvate = (2S,4S)-4-hydroxy-2,3,4,5-tetrahydrodipicolinate + H2O + H(+). The protein operates within amino-acid biosynthesis; L-lysine biosynthesis via DAP pathway; (S)-tetrahydrodipicolinate from L-aspartate: step 3/4. Its function is as follows. Catalyzes the condensation of (S)-aspartate-beta-semialdehyde [(S)-ASA] and pyruvate to 4-hydroxy-tetrahydrodipicolinate (HTPA). This Synechococcus elongatus (strain ATCC 33912 / PCC 7942 / FACHB-805) (Anacystis nidulans R2) protein is 4-hydroxy-tetrahydrodipicolinate synthase.